The sequence spans 285 residues: Elongation factor Ts (285 aa).

The segment at 82 to 85 (TDFV) is involved in Mg(2+) ion dislocation from EF-Tu.

This sequence belongs to the EF-Ts family.

The protein localises to the cytoplasm. In terms of biological role, associates with the EF-Tu.GDP complex and induces the exchange of GDP to GTP. It remains bound to the aminoacyl-tRNA.EF-Tu.GTP complex up to the GTP hydrolysis stage on the ribosome. In Sodalis glossinidius (strain morsitans), this protein is Elongation factor Ts.